The sequence spans 292 residues: 4-hydroxy-tetrahydrodipicolinate synthase (292 aa).

A pyruvate-binding site is contributed by Thr-45. Tyr-133 acts as the Proton donor/acceptor in catalysis. Lys-162 acts as the Schiff-base intermediate with substrate in catalysis. Pyruvate is bound at residue Ile-204.

This sequence belongs to the DapA family. In terms of assembly, homotetramer; dimer of dimers.

The protein resides in the cytoplasm. The catalysed reaction is L-aspartate 4-semialdehyde + pyruvate = (2S,4S)-4-hydroxy-2,3,4,5-tetrahydrodipicolinate + H2O + H(+). Its pathway is amino-acid biosynthesis; L-lysine biosynthesis via DAP pathway; (S)-tetrahydrodipicolinate from L-aspartate: step 3/4. In terms of biological role, catalyzes the condensation of (S)-aspartate-beta-semialdehyde [(S)-ASA] and pyruvate to 4-hydroxy-tetrahydrodipicolinate (HTPA). In Maridesulfovibrio salexigens (strain ATCC 14822 / DSM 2638 / NCIMB 8403 / VKM B-1763) (Desulfovibrio salexigens), this protein is 4-hydroxy-tetrahydrodipicolinate synthase.